We begin with the raw amino-acid sequence, 505 residues long: Sucrose porin (505 aa).

The N-terminal stretch at 1 to 22 (MYKKRKLAILIALLTGTAAAHG) is a signal peptide. The disordered stretch occupies residues 44 to 94 (ETRASTAESRAASAEQKVQQLTQQQQQTQATTQQVARRTTQLEEKAERPGG). Over residues 46-82 (RASTAESRAASAEQKVQQLTQQQQQTQATTQQVARRT) the composition is skewed to low complexity. Residues 83-93 (TQLEEKAERPG) are compositionally biased toward basic and acidic residues.

Belongs to the porin LamB (TC 1.B.3) family. Homotrimer.

Its subcellular location is the cell outer membrane. In terms of biological role, porin for sucrose uptake. The chain is Sucrose porin (scrY) from Klebsiella pneumoniae.